The primary structure comprises 271 residues: MDNRPIGLLDSGVGGLTVARELLRQLPNEEIVYIGDTRRAPYGPRSREQIIAFTWDMVNFLLSKNVKMIVMACNTATAMALEIVKEELDIPVIGVILPGASSAIQKTKTNKIGVIATQASIRSDEYHKTIARKSSAIEVLSLACPKFVSIVESNEMESEIAKRVVSESLAPLVGKIDTLILGCTHYPLLRPLIQETMGKEVRLIDSGAEAVRDISVLLNYFEINAHERKEFQHCFYTTAGVNSFREIAEKWLNIGHLHIEHAEIENFNKEK.

Residues 10–11 (DS) and 42–43 (YG) each bind substrate. The active-site Proton donor/acceptor is C73. A substrate-binding site is contributed by 74-75 (NT). C183 serves as the catalytic Proton donor/acceptor. 184-185 (TH) provides a ligand contact to substrate.

Belongs to the aspartate/glutamate racemases family.

It catalyses the reaction L-glutamate = D-glutamate. Its pathway is cell wall biogenesis; peptidoglycan biosynthesis. Provides the (R)-glutamate required for cell wall biosynthesis. In Lactococcus lactis subsp. cremoris (strain MG1363), this protein is Glutamate racemase.